We begin with the raw amino-acid sequence, 342 residues long: tRNA (guanine(26)-N(2))-dimethyltransferase (342 aa).

In terms of domain architecture, Trm1 methyltransferase spans 1–336 (MRITEGSAVI…CPYAEVSEIL (336 aa)). Residues arginine 35, arginine 60, and glutamate 76 each coordinate S-adenosyl-L-methionine.

Belongs to the class I-like SAM-binding methyltransferase superfamily. Trm1 family.

The catalysed reaction is guanosine(26) in tRNA + 2 S-adenosyl-L-methionine = N(2)-dimethylguanosine(26) in tRNA + 2 S-adenosyl-L-homocysteine + 2 H(+). In terms of biological role, dimethylates a single guanine residue at position 26 of a number of tRNAs using S-adenosyl-L-methionine as donor of the methyl groups. This Thermoplasma volcanium (strain ATCC 51530 / DSM 4299 / JCM 9571 / NBRC 15438 / GSS1) protein is tRNA (guanine(26)-N(2))-dimethyltransferase.